We begin with the raw amino-acid sequence, 231 residues long: Large ribosomal subunit protein uL1 (231 aa).

It belongs to the universal ribosomal protein uL1 family. In terms of assembly, part of the 50S ribosomal subunit.

Binds directly to 23S rRNA. The L1 stalk is quite mobile in the ribosome, and is involved in E site tRNA release. In terms of biological role, protein L1 is also a translational repressor protein, it controls the translation of the L11 operon by binding to its mRNA. This is Large ribosomal subunit protein uL1 from Macrococcus caseolyticus (strain JCSC5402) (Macrococcoides caseolyticum).